Reading from the N-terminus, the 100-residue chain is Large ribosomal subunit protein uL23 (100 aa).

The protein belongs to the universal ribosomal protein uL23 family. As to quaternary structure, part of the 50S ribosomal subunit. Contacts protein L29, and trigger factor when it is bound to the ribosome.

One of the early assembly proteins it binds 23S rRNA. One of the proteins that surrounds the polypeptide exit tunnel on the outside of the ribosome. Forms the main docking site for trigger factor binding to the ribosome. This is Large ribosomal subunit protein uL23 from Shewanella halifaxensis (strain HAW-EB4).